The following is a 728-amino-acid chain: Polyribonucleotide nucleotidyltransferase (728 aa).

Residues Asp-489 and Asp-495 each coordinate Mg(2+). A KH domain is found at 556–615 (PKIDTIKIDVDKIKIVIGKGGETIDKIIAETGVKIDIDEEGNVSIYSSDQDAINRAKEII). The S1 motif domain occupies 625–693 (DEVYHAKVVR…AKGRVDASMK (69 aa)). A disordered region spans residues 691 to 728 (SMKALLPRPPKPEKSDKHHDKGHPHKKHEEAPLTQTEE). The segment covering 700-709 (PKPEKSDKHH) has biased composition (basic and acidic residues).

Belongs to the polyribonucleotide nucleotidyltransferase family. The cofactor is Mg(2+).

The protein resides in the cytoplasm. The catalysed reaction is RNA(n+1) + phosphate = RNA(n) + a ribonucleoside 5'-diphosphate. Involved in mRNA degradation. Catalyzes the phosphorolysis of single-stranded polyribonucleotides processively in the 3'- to 5'-direction. The sequence is that of Polyribonucleotide nucleotidyltransferase from Streptococcus gordonii (strain Challis / ATCC 35105 / BCRC 15272 / CH1 / DL1 / V288).